We begin with the raw amino-acid sequence, 119 residues long: Large ribosomal subunit protein bL20 (119 aa).

Belongs to the bacterial ribosomal protein bL20 family.

Functionally, binds directly to 23S ribosomal RNA and is necessary for the in vitro assembly process of the 50S ribosomal subunit. It is not involved in the protein synthesizing functions of that subunit. This chain is Large ribosomal subunit protein bL20, found in Methylocella silvestris (strain DSM 15510 / CIP 108128 / LMG 27833 / NCIMB 13906 / BL2).